The following is a 709-amino-acid chain: MFANPVVKSFQYGNHTVTLETGVIARQATAAVMASMDDTSVFVSVVAKKEAVPGQDFFPLTVNYQERTYAAGKIPGGFFKREGRPSEAETLTARLIDRPIRPLFPDAFKNEVQVIATVVSINPEVNPDMITMIGTSAALAIAGIPFNGPIGAARVGHINGELVLNPSNTELENSKLDLVVSGTEGAVLMVESEADNLTEEEMLSAVVFGHEQQQVVINAINEFAAEVATPAWDWVAPEENTVLNARIAELAEAKLVEAYQITEKMTRYDRIHEIAAEVNEVLVSENEDVNLKEVHTIFHDLEKTVVRRSIIAGNPRIDGREKDMVRALDVRTGVLPRTHGSSLFTRGETQALVTATLGTQRDAQIIDSLMGEKKDHFLLHYNFPPYCVGETGFVGSPKRREIGHGKLAKRGIQAVMPSIEEFPYTVRVVSEITESNGSSSMASVCGTSLALMDAGVPIKASVAGIAMGLVKEGDDFVVLSDILGDEDHLGDMDFKVAGTNEGITALQMDIKIEGITKEIMQIALNQAQGARKHILKVMDEAISGAREEISEFAPRIHTMKISSDKIKDVIGKGGAVIRALCEETGTTIEIEDDGTIKIAATEGAAAKEAIRRIEEITAEVEVGKIYTGKVMRIVDFGAFVTVLGPKEGLVHISQIAEERIEKVADHLQVGQEVKTKVLEIDRQGRIRLSIKEANAELNPAPAAEAKDAE.

Mg(2+)-binding residues include aspartate 487 and aspartate 493. In terms of domain architecture, KH spans 554–613; that stretch reads PRIHTMKISSDKIKDVIGKGGAVIRALCEETGTTIEIEDDGTIKIAATEGAAAKEAIRRI. The S1 motif domain occupies 623-691; that stretch reads GKIYTGKVMR…RQGRIRLSIK (69 aa).

Belongs to the polyribonucleotide nucleotidyltransferase family. In terms of assembly, component of the RNA degradosome, which is a multiprotein complex involved in RNA processing and mRNA degradation. The cofactor is Mg(2+).

The protein localises to the cytoplasm. The catalysed reaction is RNA(n+1) + phosphate = RNA(n) + a ribonucleoside 5'-diphosphate. Functionally, involved in mRNA degradation. Catalyzes the phosphorolysis of single-stranded polyribonucleotides processively in the 3'- to 5'-direction. The chain is Polyribonucleotide nucleotidyltransferase from Aliivibrio fischeri (strain ATCC 700601 / ES114) (Vibrio fischeri).